A 356-amino-acid polypeptide reads, in one-letter code: MAPMGIRLSPLGVAVFFLLGLGVLYHLYSGFLAGRFSLFGLGGEPAGGAAEVAVDGGTVDLREMLAVAVLAAERGGDEVRRVRESNVLHEKSKGKTREGAEDKMTSGDVLSNRKMFYLLKTAFPNVQINTEEHVDASDKEVIVWNRKIPEDILKEIAAPKEVPAESVTVWIDPLDATQEYTEDLRKYVTTMVCVAVNGKPVLGVIHKPFSEYTAWAMVDSGSNVKARSSYNEKTPKIIVSRSHAGMVKQVALQTFGNQTLIIPAGGAGYKVLALLDVPDMTQEKADLYIHVTYIKKWDICAGNAILKALGGHMTTLSGEEISYTGSDGIEGGLLASIRMNHQALVRKLPDLEKSGH.

Methionine 1 carries the N-acetylmethionine modification. At 1 to 12 (MAPMGIRLSPLG) the chain is on the cytoplasmic side. A helical transmembrane segment spans residues 13–33 (VAVFFLLGLGVLYHLYSGFLA). The Lumenal segment spans residues 34–356 (GRFSLFGLGG…KLPDLEKSGH (323 aa)). A disordered region spans residues 82-104 (VRESNVLHEKSKGKTREGAEDKM). The active-site Proton acceptor is the aspartate 108. Mg(2+) contacts are provided by glutamate 131, aspartate 172, leucine 174, and aspartate 175. The Proton acceptor role is filled by threonine 177. Positions 240 and 243 each coordinate AMP. The N-linked (GlcNAc...) asparagine glycan is linked to asparagine 257. Positions 266 and 270 each coordinate AMP. Mg(2+) is bound at residue aspartate 298.

It belongs to the inositol monophosphatase superfamily. Mg(2+) is required as a cofactor. Post-translationally, contains N-linked glycan resistant to endoglycosydase H.

The protein localises to the golgi apparatus. Its subcellular location is the trans-Golgi network membrane. It catalyses the reaction adenosine 3',5'-bisphosphate + H2O = AMP + phosphate. It participates in sulfur metabolism. With respect to regulation, strongly inhibited by lithium. Functionally, exhibits 3'-nucleotidase activity toward adenosine 3',5'-bisphosphate (PAP), namely hydrolyzes adenosine 3',5'-bisphosphate into adenosine 5'-monophosphate (AMP) and a phosphate. May play a role in the formation of skeletal elements derived through endochondral ossification, possibly by clearing adenosine 3',5'-bisphosphate produced by Golgi sulfotransferases during glycosaminoglycan sulfation. Has no activity toward 3'-phosphoadenosine 5'-phosphosulfate (PAPS) or inositol phosphate (IP) substrates including I(1)P, I(1,4)P2, I(1,3,4)P3, I(1,4,5)P3 and I(1,3,4,5)P4. The sequence is that of Golgi-resident adenosine 3',5'-bisphosphate 3'-phosphatase (Bpnt2) from Rattus norvegicus (Rat).